Here is a 1100-residue protein sequence, read N- to C-terminus: DNA repair protein RAD1 (1100 aa).

Positions 1-47 (MSQLFYQGDSDDELQEELTRQTTQASQSSKIKNEDEPDDSNHLNEVE) are disordered. Polar residues predominate over residues 20 to 30 (RQTTQASQSSK). The span at 31–47 (IKNEDEPDDSNHLNEVE) shows a compositional bias: basic and acidic residues. The residue at position 613 (Ser613) is a Phosphoserine. In terms of domain architecture, ERCC4 spans 821–901 (VVIVDTREFN…YPTLLIEFDE (81 aa)). The disordered stretch occupies residues 1063–1100 (EKEEQEQESTDENLESPGKTTDDNALHDHHNDVPEAPV). The span at 1065–1076 (EEQEQESTDENL) shows a compositional bias: acidic residues. Ser1071 is modified (phosphoserine). Phosphothreonine is present on Thr1072. The segment covering 1082-1100 (TTDDNALHDHHNDVPEAPV) has biased composition (basic and acidic residues).

Belongs to the XPF family. Component of the nucleotide excision repair factor 1 (NEF1) complex consisting of RAD1, RAD10 and RAD14. Interacts with SAW1.

Its subcellular location is the nucleus. In terms of biological role, involved in nucleotide excision repair of DNA damaged with UV light, bulky adducts, or cross-linking agents. Along with RAD10 forms an endonuclease that specifically degrades single-stranded DNA. In Saccharomyces cerevisiae (strain ATCC 204508 / S288c) (Baker's yeast), this protein is DNA repair protein RAD1 (RAD1).